The chain runs to 729 residues: Anti-bacteriophage protein B (729 aa).

In terms of domain architecture, Helicase ATP-binding spans 109–271; the sequence is FDLLKSGQNV…KLGYPHTFVS (163 aa). An ATP-binding site is contributed by 122-129; the sequence is APTSMGKS. The region spanning 297–472 is the Helicase C-terminal domain; the sequence is ALGEIAHACV…GIDTPINLLA (176 aa).

This sequence belongs to the helicase family. In terms of assembly, interacts with AbpB.

Functionally, part of an antiviral system composed of AbpA and AbpB; when both are expressed from a plasmid they confer resistance to phages T2, T4, T7 and lambda but not RB32 or RB69. Resistance is temperature dependent, it can be seen at 30 degrees Celsius but not at 37 or 42 degrees Celsius. The system impairs phage but not bacterial DNA synthesis (shown for T4, T7 and lambda). Partially suppressed by mutations in T4 gene 41, a replicative helicase. Deletion or mutations in this gene were selected in directed evolution experiments for resistance to intense ionizing radiation (3000 Gy). The sequence is that of Anti-bacteriophage protein B from Escherichia coli (strain K12).